The chain runs to 227 residues: Esterase OVCA2 (227 aa).

Residues 44–68 (GPHPVPDPPGPEGARSDFGSCPPEE) are disordered. Residues Ser119, Asp179, and His206 each act as charge relay system in the active site.

Belongs to the LovG family. Post-translationally, proteolytically degraded in response to RA and 4HPR treatment in a time- and dose-dependent manner in the promyelocytic leukemia cell line HL-60. Ubiquitously expressed.

It catalyses the reaction a carboxylic ester + H2O = an alcohol + a carboxylate + H(+). Exhibits ester hydrolase activity with a strong preference for long-chain alkyl ester substrates and high selectivity against a variety of short, branched, and substituted esters. Is able to hydrolyze ester bonds within a wide range of p-nitrophenyl derivatives (C2-C14) in vitro, with a strong preference toward substrates of &gt;8 carbons. This is Esterase OVCA2 from Homo sapiens (Human).